The primary structure comprises 417 residues: C6 finger transcription factor traC (417 aa).

The tract at residues 1–40 is disordered; the sequence is MNFSEQFTGRSEPGRKANRTSNNNTNSTTNVATVTTDDSN. Residues 19–37 are compositionally biased toward low complexity; sequence RTSNNNTNSTTNVATVTTD. The segment at residues 44 to 73 is a DNA-binding region (zn(2)-C6 fungal-type); sequence CDRCKGQKLRCIWENGSNTCRRCTRARAVC. Disordered regions lie at residues 75–94 and 104–128; these read QPRP…KHHV and WVSS…DDHD. Basic residues predominate over residues 80-94; sequence PFGRPRCSTKSKHHV. The segment covering 104–114 has biased composition (polar residues); it reads WVSSTTQQPQE.

The protein localises to the nucleus. Its function is as follows. C6 finger transcription factor; part of the tra gene cluster that produces terrestric acid. The clavatol biosynthesis cluster cla and the terrestric acid cluster tra are both involved in the production of peniphenones and penilactones. This is C6 finger transcription factor traC from Penicillium crustosum (Blue mold fungus).